The sequence spans 267 residues: Regulatory protein VirG (267 aa).

The Response regulatory domain maps to 29-143 (HVLLVDDDVA…EFLARIRVAL (115 aa)). Asp78 is modified (4-aspartylphosphate). The segment at residues 155–255 (RRSFCFTDWT…ARGAGYFFDA (101 aa)) is a DNA-binding region (ompR/PhoB-type).

Post-translationally, phosphorylated by wide host range (WHR) VirA protein.

The protein resides in the cytoplasm. In terms of biological role, virG is required for the positive regulation of at least two vir loci encoded by the Ti plasmid of A.tumefaciens. The chain is Regulatory protein VirG (virG) from Rhizobium radiobacter (Agrobacterium tumefaciens).